Reading from the N-terminus, the 546-residue chain is DDB1- and CUL4-associated factor 11 (546 aa).

The span at 1 to 19 shows a compositional bias: low complexity; that stretch reads MGSRNSSSAGSGSGDPSEG. The interval 1–40 is disordered; that stretch reads MGSRNSSSAGSGSGDPSEGLTRRGAGLRRSEEEEEEDEDV. A Phosphoserine modification is found at Ser-75. WD repeat units lie at residues 170–210, 216–258, 263–302, 305–345, 353–392, 435–480, and 481–520; these read SYSQ…RKFK, DVGW…TALD, ERRF…RTLQ, SHED…EDDP, GHQD…SREG, GVLH…KKLT, and NHKA…YFQD. Residues 523–546 form a disordered region; the sequence is PESEECASAPAPVPRSSTPFSSPQ. Residues 537-546 are compositionally biased toward polar residues; the sequence is RSSTPFSSPQ.

As to quaternary structure, interacts with DDB1 and CUL4A.

It participates in protein modification; protein ubiquitination. Its function is as follows. May function as a substrate receptor for CUL4-DDB1 E3 ubiquitin-protein ligase complex. This is DDB1- and CUL4-associated factor 11 (DCAF11) from Pongo abelii (Sumatran orangutan).